A 60-amino-acid chain; its full sequence is UPF0434 protein mma_2578 (60 aa).

This sequence belongs to the UPF0434 family.

The sequence is that of UPF0434 protein mma_2578 from Janthinobacterium sp. (strain Marseille) (Minibacterium massiliensis).